A 329-amino-acid chain; its full sequence is Short-chain dehydrogenase/reductase tropG (329 aa).

Residues Lys57, Asp86, Asn113, Tyr203, and Lys207 each contribute to the NADP(+) site. Residue Tyr203 is the Proton acceptor of the active site. Lys207 serves as the catalytic Lowers pKa of active site Tyr.

The protein belongs to the short-chain dehydrogenases/reductases (SDR) family.

Its pathway is secondary metabolite biosynthesis. Short-chain dehydrogenase/reductase; part of the gene cluster that mediates the biosynthesis of the tropolone class of fungal maleic anhydrides. The pathway begins with the synthesis of 3-methylorcinaldehyde by the non-reducing polyketide synthase (PKS) tropA. 3-methylorcinaldehyde is the substrate for the FAD-dependent monooxygenase tropB to yield a dearomatized hydroxycyclohexadione. The 2-oxoglutarate-dependent dioxygenase tropC then performs the oxidative ring expansion to provide the first tropolone metabolite stipitaldehyde. Trop D converts stipitaldehyde into stipitacetal which is in turn converted to stipitalide by the short-chain dehydrogenase/reductase tropE. The next steps involve tropF, tropG, tropH, tropI and tropJ to form successive tropolone maleic anhydrides including stipitaldehydic, stipitatonic and stipitatic acids. This is Short-chain dehydrogenase/reductase tropG from Talaromyces stipitatus (strain ATCC 10500 / CBS 375.48 / QM 6759 / NRRL 1006) (Penicillium stipitatum).